Here is a 598-residue protein sequence, read N- to C-terminus: Nitrate/nitrite sensor protein NarX (598 aa).

The Cytoplasmic segment spans residues 1–14 (MLKRCLSPLTLVNQ). The chain crosses the membrane as a helical span at residues 15–37 (VALIVLLSTAIGLAGMAVSGWLV). Residues 38-151 (QGVQGSAHAI…DRTTEMRIET (114 aa)) are Periplasmic-facing. The helical transmembrane segment at 152–174 (VVLVHRVMAVFMALLLVFTIIWL) threads the bilayer. Topologically, residues 175-598 (RARLLQPWRQ…FTDVQGDTHE (424 aa)) are cytoplasmic. The HAMP domain maps to 176-228 (ARLLQPWRQLLAMASAVSHRDFTQRANISGRNEMAMLGTALNNMSAELAESYA). Residues 393–587 (TIARELHDSI…EVVVTFIPEK (195 aa)) form the Histidine kinase domain. Phosphohistidine; by autocatalysis is present on His399.

It localises to the cell inner membrane. The enzyme catalyses ATP + protein L-histidine = ADP + protein N-phospho-L-histidine.. Acts as a sensor for nitrate/nitrite and transduces signal of nitrate availability to the NarL protein and of both nitrate/nitrite to the NarP protein. NarX probably activates NarL and NarP by phosphorylation in the presence of nitrate. NarX also plays a negative role in controlling NarL activity, probably through dephosphorylation in the absence of nitrate. This Escherichia coli O157:H7 protein is Nitrate/nitrite sensor protein NarX (narX).